The sequence spans 312 residues: Olfactory receptor 51A7 (312 aa).

Residues 1–25 lie on the Extracellular side of the membrane; it reads MSVLNNSEVKLFLLIGIPGLEHAHI. N-linked (GlcNAc...) asparagine glycosylation is present at N5. Residues 26 to 46 traverse the membrane as a helical segment; it reads WFSIPICLMYLLAIMGNCTIL. At 47 to 54 the chain is on the cytoplasmic side; it reads FIIKTEPS. The chain crosses the membrane as a helical span at residues 55-75; sequence LHEPMYYFLAMLAVSDMGLSL. Topologically, residues 76–99 are extracellular; sequence SSLPTMLRVFLFNAMGISPNACFA. C97 and C189 are oxidised to a cystine. The chain crosses the membrane as a helical span at residues 100–120; that stretch reads QEFFIHGFTVMESSVLLIMSL. Topologically, residues 121 to 139 are cytoplasmic; the sequence is DRFLAIHNPLRYSSILTSN. A helical membrane pass occupies residues 140 to 160; that stretch reads RVAKMGLILAIRSILLVIPFP. At 161–196 the chain is on the extracellular side; it reads FTLRRLKYCQKNLLSHSYCLHQDTMKLACSDNKTNV. N192 carries an N-linked (GlcNAc...) asparagine glycan. Residues 197-216 traverse the membrane as a helical segment; it reads IYGFFIALCTMLDLALIVLS. Residues 217–236 lie on the Cytoplasmic side of the membrane; that stretch reads YVLILKTILSIASLAERLKA. Residues 237 to 257 form a helical membrane-spanning segment; that stretch reads LNTCVSHICAVLTFYVPIITL. Residues 258–272 are Extracellular-facing; it reads AAMHHFAKHKSPLVV. A helical transmembrane segment spans residues 273 to 293; that stretch reads ILIADMFLLVPPLMNPIVYCV. The Cytoplasmic portion of the chain corresponds to 294 to 312; that stretch reads KTRQIWEKILGKLLNVCGR.

Belongs to the G-protein coupled receptor 1 family.

The protein resides in the cell membrane. In terms of biological role, odorant receptor. In Homo sapiens (Human), this protein is Olfactory receptor 51A7 (OR51A7).